The sequence spans 392 residues: uncharacterized protein (392 aa).

Positions 1 to 23 (MWTALVLVWISSVLLPRSHMMSA) are cleaved as a signal peptide. Residues 24-342 (EPRNIVTNKW…DALTPSLVNK (319 aa)) are Extracellular-facing. N-linked (GlcNAc...) asparagine glycosylation occurs at asparagine 77. 2 disordered regions span residues 83–154 (AEVT…PRTA) and 167–320 (AAGT…TDSC). The segment covering 86–97 (TTHGTNTSTPTT) has biased composition (low complexity). Polar residues-rich tracts occupy residues 107–127 (SRTL…TRPT) and 170–249 (TVNT…SAST). The N-linked (GlcNAc...) asparagine glycan is linked to asparagine 172. Low complexity-rich tracts occupy residues 265–277 (SPTT…LPTQ) and 284–309 (TLLT…SRSS). Residues 343–363 (MLLLVVLLVGVTLFIAVLVMF) traverse the membrane as a helical segment. At 364-392 (ALQAYESYKKKDYTQVDYLINGMYADSEM) the chain is on the cytoplasmic side.

The protein localises to the cell membrane. It is found in the golgi apparatus. Its subcellular location is the trans-Golgi network membrane. This is an uncharacterized protein from Mus musculus (Mouse).